Here is a 101-residue protein sequence, read N- to C-terminus: Large ribosomal subunit protein uL23 (101 aa).

Belongs to the universal ribosomal protein uL23 family. In terms of assembly, part of the 50S ribosomal subunit. Contacts protein L29, and trigger factor when it is bound to the ribosome.

In terms of biological role, one of the early assembly proteins it binds 23S rRNA. One of the proteins that surrounds the polypeptide exit tunnel on the outside of the ribosome. Forms the main docking site for trigger factor binding to the ribosome. In Leptospira biflexa serovar Patoc (strain Patoc 1 / Ames), this protein is Large ribosomal subunit protein uL23.